A 276-amino-acid polypeptide reads, in one-letter code: Putative pyruvate, phosphate dikinase regulatory protein (276 aa).

150–157 lines the ADP pocket; sequence GVSRTSKT.

The protein belongs to the pyruvate, phosphate/water dikinase regulatory protein family. PDRP subfamily.

It catalyses the reaction N(tele)-phospho-L-histidyl/L-threonyl-[pyruvate, phosphate dikinase] + ADP = N(tele)-phospho-L-histidyl/O-phospho-L-threonyl-[pyruvate, phosphate dikinase] + AMP + H(+). The catalysed reaction is N(tele)-phospho-L-histidyl/O-phospho-L-threonyl-[pyruvate, phosphate dikinase] + phosphate + H(+) = N(tele)-phospho-L-histidyl/L-threonyl-[pyruvate, phosphate dikinase] + diphosphate. Bifunctional serine/threonine kinase and phosphorylase involved in the regulation of the pyruvate, phosphate dikinase (PPDK) by catalyzing its phosphorylation/dephosphorylation. The protein is Putative pyruvate, phosphate dikinase regulatory protein of Lacticaseibacillus casei (strain BL23) (Lactobacillus casei).